Here is a 1179-residue protein sequence, read N- to C-terminus: Integrin alpha-1 (1179 aa).

Residues 1–28 (MAPRPRARPGVAVACCWLLTVVLRCCVS) form the signal peptide. At 29–1141 (FNVDVKNSMT…SKDGLPGRVP (1113 aa)) the chain is on the extracellular side. The stretch at 30–91 (NVDVKNSMTF…CPVGRGESLP (62 aa)) is one FG-GAP 1 repeat. N-linked (GlcNAc...) asparagine glycosylation occurs at asparagine 74. Cysteine 82 and cysteine 92 are joined by a disulfide. 9 N-linked (GlcNAc...) asparagine glycosylation sites follow: asparagine 100, asparagine 105, asparagine 112, asparagine 217, asparagine 317, asparagine 341, asparagine 402, asparagine 418, and asparagine 460. One copy of the FG-GAP 2 repeat lies at 101-160 (TSIPNVTEVKENMTFGSTLVTNPNGGFLACGPLYAYRCGHLHYTTGICSDVSPTFQVVNS). The VWFA domain maps to 161–360 (IAPVQECSTQ…IVKTLGERIF (200 aa)). The stretch at 365-417 (TADQSAASFEMEMSQTGFSAHYSQDWVMLGAVGAYDWNGTVVMQKASQIIIPR) is one FG-GAP 3 repeat. 4 FG-GAP repeats span residues 422 to 475 (NVES…DGNI), 476 to 538 (KILQ…RFEY), 557 to 615 (SCTT…TIRK), and 619 to 679 (QRIP…FEPN). Positions 498, 500, 502, and 506 each coordinate Ca(2+). Residue asparagine 532 is glycosylated (N-linked (GlcNAc...) asparagine). Residues aspartate 580, asparagine 582, aspartate 584, aspartate 588, aspartate 642, asparagine 644, aspartate 646, and aspartate 650 each coordinate Ca(2+). Cysteine 688 and cysteine 697 are joined by a disulfide. Asparagine 699, asparagine 748, and asparagine 780 each carry an N-linked (GlcNAc...) asparagine glycan. A disulfide bridge links cysteine 703 with cysteine 756. The cysteines at positions 808 and 814 are disulfide-linked. N-linked (GlcNAc...) asparagine glycosylation is found at asparagine 840, asparagine 883, asparagine 908, asparagine 915, asparagine 939, asparagine 966, asparagine 974, and asparagine 1008. Cysteines 878 and 886 form a disulfide. Cystine bridges form between cysteine 1030–cysteine 1062 and cysteine 1065–cysteine 1072. 4 N-linked (GlcNAc...) asparagine glycosylation sites follow: asparagine 1073, asparagine 1083, asparagine 1102, and asparagine 1113. Residues 1142-1164 (LWVILLSAFAGLLLLMLLILALW) traverse the membrane as a helical segment. Residues 1165–1179 (KIGFFKRPLKKKMEK) are Cytoplasmic-facing. The short motif at 1167–1171 (GFFKR) is the GFFKR motif element.

Belongs to the integrin alpha chain family. In terms of assembly, heterodimer of an alpha and a beta subunit. Alpha-1 associates with beta-1. Interacts with RAB21. Interacts (via cytoplasmic domain) with PTPN2; activates PTPN2 phosphatase activity towards EGFR and negatively regulates EGF signaling.

It is found in the membrane. Functionally, integrin alpha-1/beta-1 is a receptor for laminin and collagen. It recognizes the proline-hydroxylated sequence G-F-P-G-E-R in collagen. Involved in anchorage-dependent, negative regulation of EGF-stimulated cell growth. This Homo sapiens (Human) protein is Integrin alpha-1 (ITGA1).